Here is a 1753-residue protein sequence, read N- to C-terminus: Negative regulator of sporulation PMD1 (1753 aa).

Kelch repeat units lie at residues 143 to 198 (NIYI…VLNE) and 206 to 253 (KLII…KILV). The residue at position 298 (threonine 298) is a Phosphothreonine. Positions 651–664 (TTKFGNSSQSSNGS) are enriched in polar residues. Disordered regions lie at residues 651–753 (TTKF…TTCS) and 771–807 (LGLS…CTLS). Residues 670 to 683 (SKNGNSKSNSNTSL) are compositionally biased toward low complexity. Polar residues-rich tracts occupy residues 690 to 699 (DFTSSTSSPK), 740 to 753 (TGTS…TTCS), 774 to 783 (SEQSGRSTRA), and 797 to 807 (NDGNDSNCTLS). Serine 838 carries the phosphoserine modification. 3 disordered regions span residues 875 to 915 (IASP…LGSS), 938 to 957 (PLEP…SSLA), and 962 to 988 (FGRD…ARRI). Residues 880–900 (QSRQTSFASTASTASVVSSTS) show a composition bias toward low complexity. Pro residues predominate over residues 938–947 (PLEPLPPVPK). Residues 979 to 988 (KSSSSDARRI) show a composition bias toward low complexity. Phosphoserine occurs at positions 1289, 1307, and 1356. 3 disordered regions span residues 1312 to 1467 (SPAT…DLDS), 1604 to 1686 (PIFA…NKRF), and 1706 to 1753 (SAVN…GKRR). Residues 1344–1379 (VSRQQNFPRRSSSFTETVPTEPTRYNYQNLDSSKSN) are compositionally biased toward polar residues. Residues 1399 to 1430 (NFDKYKVETLQKRNSNDGKDLDRTNDPLKNRG) show a composition bias toward basic and acidic residues. Over residues 1653-1677 (IKFSQAPSTQISPRTSVTDFTASQQ) the composition is skewed to polar residues. Serine 1664 is subject to Phosphoserine. Residues 1711-1723 (GRKESEGHCEDRS) are compositionally biased toward basic and acidic residues.

It is found in the cytoplasm. Negatively regulates early sporulation-specific genes. Seems to exert its function by positively regulating the Ras/cAMP pathway. Required for growth under alkaline conditions. Acts synergetically with MDS3. The chain is Negative regulator of sporulation PMD1 (PMD1) from Saccharomyces cerevisiae (strain ATCC 204508 / S288c) (Baker's yeast).